A 436-amino-acid chain; its full sequence is Phosphomethylpyrimidine synthase (436 aa).

Residues asparagine 68, methionine 97, tyrosine 126, histidine 166, 188–190 (SRG), 229–232 (DGFR), and glutamate 268 contribute to the substrate site. Histidine 272 lines the Zn(2+) pocket. Tyrosine 295 contacts substrate. Zn(2+) is bound at residue histidine 336. Positions 412, 415, and 419 each coordinate [4Fe-4S] cluster.

This sequence belongs to the ThiC family. In terms of assembly, homodimer. [4Fe-4S] cluster is required as a cofactor.

It carries out the reaction 5-amino-1-(5-phospho-beta-D-ribosyl)imidazole + S-adenosyl-L-methionine = 4-amino-2-methyl-5-(phosphooxymethyl)pyrimidine + CO + 5'-deoxyadenosine + formate + L-methionine + 3 H(+). Its pathway is cofactor biosynthesis; thiamine diphosphate biosynthesis. Catalyzes the synthesis of the hydroxymethylpyrimidine phosphate (HMP-P) moiety of thiamine from aminoimidazole ribotide (AIR) in a radical S-adenosyl-L-methionine (SAM)-dependent reaction. The sequence is that of Phosphomethylpyrimidine synthase from Geobacter metallireducens (strain ATCC 53774 / DSM 7210 / GS-15).